The primary structure comprises 53 residues: MPQMAPIGWLSLFIIFSLTFILFSMMNYYSTIPQSPKSQILKKSQTNSMNWKW.

Residues 6–26 form a helical membrane-spanning segment; that stretch reads PIGWLSLFIIFSLTFILFSMM.

Belongs to the ATPase protein 8 family. F-type ATPases have 2 components, CF(1) - the catalytic core - and CF(0) - the membrane proton channel.

The protein localises to the mitochondrion membrane. Its function is as follows. Mitochondrial membrane ATP synthase (F(1)F(0) ATP synthase or Complex V) produces ATP from ADP in the presence of a proton gradient across the membrane which is generated by electron transport complexes of the respiratory chain. F-type ATPases consist of two structural domains, F(1) - containing the extramembraneous catalytic core and F(0) - containing the membrane proton channel, linked together by a central stalk and a peripheral stalk. During catalysis, ATP synthesis in the catalytic domain of F(1) is coupled via a rotary mechanism of the central stalk subunits to proton translocation. Part of the complex F(0) domain. Minor subunit located with subunit a in the membrane. The protein is ATP synthase protein 8 (mt:ATPase8) of Ceratitis capitata (Mediterranean fruit fly).